The primary structure comprises 115 residues: Transmembrane protein 14C (115 aa).

The next 4 helical transmembrane spans lie at 8–28, 33–53, 63–83, and 88–108; these read LVPL…GGII, AGSV…GLGA, VWVF…RFYN, and MPAG…VAKI.

This sequence belongs to the TMEM14 family.

The protein resides in the mitochondrion membrane. Required for normal heme biosynthesis. The sequence is that of Transmembrane protein 14C (Tmem14c) from Rattus norvegicus (Rat).